The chain runs to 536 residues: MKIFCLILFLISSFISTSLAVEPPPETIYQNFLQCFTNQTKAPPNSLADVVLPKTAAAFTPVLRAYIRNARFNTTATPKPAIVIAARSESHVQAAVICTKSLNIQLKTRSGGHDYEGVSYISHVPFFVLDMSNLRNITVDPATESAWVGAGATLGEVYYRIWEKTKSHGFPAGVCPTVGAGGHISGGGYGNMIRKYGLSVDYVTDAKIVDVNGQVLDRKGMGEDMFWAINGGGGASFGVILAFKIKLVPVPPTVTVFRVEKNLVENATEMVHKWQFVAPKTDPGLFMRLLLQPVTRNKMQTVRASVVALFLGDQNTVMSMLTKEFPELGLKKENCTEMTWIQSVMWWANNDNATQIKPEILLDRNPDMATFGKRKSDFVEKEITKDGLDFLFKKMIEVGKIGLVFNPYGGIMSTVATTKTPFPHRKKLYKIQHSMNWKDPGTEAETSFLQKAKSFYSYMAPFVTKNPRHTYINYRDLDIGVNTPGPNSYRVAEVFGRMYFGENFDRLVKVKTAVDPQNFFRDEQSIPTLPGKPARR.

Positions 1–20 (MKIFCLILFLISSFISTSLA) are cleaved as a signal peptide. A disulfide bond links cysteine 35 and cysteine 98. N-linked (GlcNAc...) asparagine glycosylation is found at asparagine 38, asparagine 73, asparagine 136, asparagine 266, asparagine 334, and asparagine 352. The FAD-binding PCMH-type domain occupies 76-250 (ATPKPAIVIA…LAFKIKLVPV (175 aa)). The 6-(S-cysteinyl)-8alpha-(pros-histidyl)-FAD (His-Cys) cross-link spans 113-175 (HDYEGVSYIS…KSHGFPAGVC (63 aa)).

The protein belongs to the oxygen-dependent FAD-linked oxidoreductase family. The cofactor is FAD. The FAD cofactor is bound via a bicovalent 6-S-cysteinyl, 8alpha-N1-histidyl FAD linkage.

Its subcellular location is the secreted. The protein localises to the cell wall. The protein is Berberine bridge enzyme-like 2 of Arabidopsis thaliana (Mouse-ear cress).